Reading from the N-terminus, the 426-residue chain is Serine hydroxymethyltransferase (426 aa).

(6S)-5,6,7,8-tetrahydrofolate-binding positions include Leu-113 and 117–119 (GHL). Lys-222 carries the N6-(pyridoxal phosphate)lysine modification. 363-365 (SAF) contacts (6S)-5,6,7,8-tetrahydrofolate.

This sequence belongs to the SHMT family. In terms of assembly, homodimer. Pyridoxal 5'-phosphate is required as a cofactor.

It is found in the cytoplasm. The catalysed reaction is (6R)-5,10-methylene-5,6,7,8-tetrahydrofolate + glycine + H2O = (6S)-5,6,7,8-tetrahydrofolate + L-serine. The protein operates within one-carbon metabolism; tetrahydrofolate interconversion. Its pathway is amino-acid biosynthesis; glycine biosynthesis; glycine from L-serine: step 1/1. Catalyzes the reversible interconversion of serine and glycine with tetrahydrofolate (THF) serving as the one-carbon carrier. This reaction serves as the major source of one-carbon groups required for the biosynthesis of purines, thymidylate, methionine, and other important biomolecules. Also exhibits THF-independent aldolase activity toward beta-hydroxyamino acids, producing glycine and aldehydes, via a retro-aldol mechanism. This chain is Serine hydroxymethyltransferase, found in Bacteroides thetaiotaomicron (strain ATCC 29148 / DSM 2079 / JCM 5827 / CCUG 10774 / NCTC 10582 / VPI-5482 / E50).